A 146-amino-acid polypeptide reads, in one-letter code: Large ribosomal subunit protein uL15 (146 aa).

Residues 1–10 (MRLNQLSPSA) are compositionally biased toward polar residues. Positions 1–54 (MRLNQLSPSAGSRPDAKRAGRGAGSGLGKTAGRGHKGQHSRSGGFHKVGFEGGQ) are disordered. Over residues 21-31 (RGAGSGLGKTA) the composition is skewed to gly residues.

The protein belongs to the universal ribosomal protein uL15 family. In terms of assembly, part of the 50S ribosomal subunit.

Binds to the 23S rRNA. This is Large ribosomal subunit protein uL15 from Halorhodospira halophila (strain DSM 244 / SL1) (Ectothiorhodospira halophila (strain DSM 244 / SL1)).